The primary structure comprises 1400 residues: DNA-directed RNA polymerase subunit beta' (1400 aa).

4 residues coordinate Zn(2+): Cys71, Cys73, Cys86, and Cys89. 3 residues coordinate Mg(2+): Asp462, Asp464, and Asp466. The Zn(2+) site is built by Cys811, Cys885, Cys892, and Cys895.

The protein belongs to the RNA polymerase beta' chain family. In terms of assembly, the RNAP catalytic core consists of 2 alpha, 1 beta, 1 beta' and 1 omega subunit. When a sigma factor is associated with the core the holoenzyme is formed, which can initiate transcription. Mg(2+) serves as cofactor. Requires Zn(2+) as cofactor.

It catalyses the reaction RNA(n) + a ribonucleoside 5'-triphosphate = RNA(n+1) + diphosphate. Functionally, DNA-dependent RNA polymerase catalyzes the transcription of DNA into RNA using the four ribonucleoside triphosphates as substrates. The protein is DNA-directed RNA polymerase subunit beta' of Brucella canis (strain ATCC 23365 / NCTC 10854 / RM-666).